Here is a 567-residue protein sequence, read N- to C-terminus: Proton-coupled zinc antiporter SLC30A9, mitochondrial (567 aa).

The next 5 helical transmembrane spans lie at 238-258 (VVMVAICINGLNCFFKFLAWI), 313-333 (GVGIFMMGAGLSWYHGIMGLL), 341-361 (LLWAYCILAGSLVSEGATLLV), 391-411 (VILLEDTAAVLGVIIAATCMG), and 423-443 (SLGSLGVGTLLGVVSAFLIYT). Positions 461-465 (LTELL) match the LXXLL motif motif.

Belongs to the cation diffusion facilitator (CDF) transporter (TC 2.A.4) family. SLC30A subfamily. Interacts with GRIP1, ESR1, AR and CTNNB1.

It localises to the mitochondrion membrane. The protein localises to the nucleus. The protein resides in the endoplasmic reticulum. It carries out the reaction Zn(2+)(in) + 2 H(+)(out) = Zn(2+)(out) + 2 H(+)(in). Acts as a zinc transporter involved in intracellular zinc homeostasis. Functions as a secondary coactivator for nuclear receptors by cooperating with p160 coactivators subtypes. Plays a role in transcriptional activation of Wnt-responsive genes. Its function is as follows. Mitochondrial proton-coupled zinc ion antiporter mediating the export of zinc from the mitochondria and involved in zinc homeostasis, zinc mobilization as well as mitochondrial morphology and health. In nucleus, functions as a secondary coactivator for nuclear receptors by cooperating with p160 coactivators subtypes. Plays a role in transcriptional activation of Wnt-responsive genes. This chain is Proton-coupled zinc antiporter SLC30A9, mitochondrial (Slc30a9), found in Mus musculus (Mouse).